The following is a 740-amino-acid chain: 1,4-alpha-glucan branching enzyme GlgB (740 aa).

The active-site Nucleophile is the D409. Residue E462 is the Proton donor of the active site.

Belongs to the glycosyl hydrolase 13 family. GlgB subfamily. In terms of assembly, monomer.

It carries out the reaction Transfers a segment of a (1-&gt;4)-alpha-D-glucan chain to a primary hydroxy group in a similar glucan chain.. Its pathway is glycan biosynthesis; glycogen biosynthesis. Catalyzes the formation of the alpha-1,6-glucosidic linkages in glycogen by scission of a 1,4-alpha-linked oligosaccharide from growing alpha-1,4-glucan chains and the subsequent attachment of the oligosaccharide to the alpha-1,6 position. The chain is 1,4-alpha-glucan branching enzyme GlgB from Methylococcus capsulatus (strain ATCC 33009 / NCIMB 11132 / Bath).